The following is an 85-amino-acid chain: RNA-binding protein Hfq (85 aa).

The 60-residue stretch at 9 to 68 (DPFLNELRKEKVPVSVFLVNGIKLHGIIDSFDQYVVMLKNSITQMVYKHAISTVVPSRMV) folds into the Sm domain.

The protein belongs to the Hfq family. Homohexamer.

RNA chaperone that binds small regulatory RNA (sRNAs) and mRNAs to facilitate mRNA translational regulation in response to envelope stress, environmental stress and changes in metabolite concentrations. Also binds with high specificity to tRNAs. The chain is RNA-binding protein Hfq from Legionella pneumophila (strain Paris).